A 262-amino-acid polypeptide reads, in one-letter code: Hydroxyethylthiazole kinase (262 aa).

Residue Met-43 participates in substrate binding. The ATP site is built by Arg-118 and Thr-164. Ala-191 serves as a coordination point for substrate.

The protein belongs to the Thz kinase family. Mg(2+) is required as a cofactor.

It catalyses the reaction 5-(2-hydroxyethyl)-4-methylthiazole + ATP = 4-methyl-5-(2-phosphooxyethyl)-thiazole + ADP + H(+). It participates in cofactor biosynthesis; thiamine diphosphate biosynthesis; 4-methyl-5-(2-phosphoethyl)-thiazole from 5-(2-hydroxyethyl)-4-methylthiazole: step 1/1. Its function is as follows. Catalyzes the phosphorylation of the hydroxyl group of 4-methyl-5-beta-hydroxyethylthiazole (THZ). The sequence is that of Hydroxyethylthiazole kinase from Cereibacter sphaeroides (strain ATCC 17025 / ATH 2.4.3) (Rhodobacter sphaeroides).